Reading from the N-terminus, the 234-residue chain is Ubiquinone biosynthesis O-methyltransferase (234 aa).

4 residues coordinate S-adenosyl-L-methionine: R36, G56, D77, and M125.

It belongs to the methyltransferase superfamily. UbiG/COQ3 family.

It catalyses the reaction a 3-demethylubiquinol + S-adenosyl-L-methionine = a ubiquinol + S-adenosyl-L-homocysteine + H(+). The catalysed reaction is a 3-(all-trans-polyprenyl)benzene-1,2-diol + S-adenosyl-L-methionine = a 2-methoxy-6-(all-trans-polyprenyl)phenol + S-adenosyl-L-homocysteine + H(+). It functions in the pathway cofactor biosynthesis; ubiquinone biosynthesis. Its function is as follows. O-methyltransferase that catalyzes the 2 O-methylation steps in the ubiquinone biosynthetic pathway. This chain is Ubiquinone biosynthesis O-methyltransferase, found in Actinobacillus pleuropneumoniae serotype 5b (strain L20).